Here is a 741-residue protein sequence, read N- to C-terminus: Interleukin-17 receptor D (741 aa).

Residues 1–26 form the signal peptide; sequence MAPGRELGAFLLALLAFCGGRRLAEA. Topologically, residues 27 to 301 are extracellular; the sequence is AGGPGGRRGA…VHSPWAGPIR (275 aa). N-linked (GlcNAc...) asparagine glycosylation is found at asparagine 57, asparagine 82, asparagine 173, asparagine 208, and asparagine 279. Residues 302 to 322 form a helical membrane-spanning segment; sequence AIAITVPLVVISAFATLFTVM. The Cytoplasmic portion of the chain corresponds to 323 to 741; it reads CRKKQQENIY…TDELQAIAPL (419 aa). The region spanning 357–510 is the SEFIR domain; the sequence is RPKVFICYSS…LMDNLPQLYS (154 aa). The segment covering 688–703 has biased composition (low complexity); sequence TETSSITGSVSSSSGL. Residues 688–708 are disordered; sequence TETSSITGSVSSSSGLGEEEP.

It is found in the membrane. Functionally, feedback inhibitor of fibroblast growth factor mediated Ras-MAPK signaling and ERK activation. May inhibit FGF-induced FGFR1 tyrosine phosphorylation. Inhibits TGFB-induced epithelial-to-mesenchymal transition in lens epithelial cells. The protein is Interleukin-17 receptor D (IL17RD) of Gallus gallus (Chicken).